We begin with the raw amino-acid sequence, 150 residues long: Catabolic 3-dehydroquinase 1 (150 aa).

Tyrosine 24 acts as the Proton acceptor in catalysis. Residues asparagine 75, histidine 81, and aspartate 88 each contribute to the substrate site. The active-site Proton donor is histidine 101. Substrate is bound by residues 102–103 and arginine 112; that span reads VS.

Belongs to the type-II 3-dehydroquinase family. As to quaternary structure, homododecamer. Adopts a ring-like structure, composed of an arrangement of two hexameric rings stacked on top of one another.

The catalysed reaction is 3-dehydroquinate = 3-dehydroshikimate + H2O. It functions in the pathway aromatic compound metabolism; 3,4-dihydroxybenzoate biosynthesis; 3,4-dihydroxybenzoate from 3-dehydroquinate: step 1/2. In terms of biological role, is involved in the catabolism of quinate. Allows the utilization of quinate as carbon source via the beta-ketoadipate pathway. This is Catabolic 3-dehydroquinase 1 from Aspergillus fumigatus (strain ATCC MYA-4609 / CBS 101355 / FGSC A1100 / Af293) (Neosartorya fumigata).